Consider the following 646-residue polypeptide: Chaperone protein DnaK (646 aa).

Thr197 is modified (phosphothreonine; by autocatalysis). Residues 599 to 646 form a disordered region; that stretch reads QQGAQAGADPNAGSSQGAQAGTDYGTSGPKTGTADDVDYEVVNDDNDK. The span at 610 to 628 shows a compositional bias: polar residues; sequence AGSSQGAQAGTDYGTSGPK. The segment covering 633–646 has biased composition (acidic residues); the sequence is DDVDYEVVNDDNDK.

This sequence belongs to the heat shock protein 70 family.

In terms of biological role, acts as a chaperone. The protein is Chaperone protein DnaK of Treponema denticola (strain ATCC 35405 / DSM 14222 / CIP 103919 / JCM 8153 / KCTC 15104).